Consider the following 291-residue polypeptide: MRLRHIEVFHAIYTTGSITNAAKALHVSQPSVSKVLSHAEMQLGFKLFERVKGRLIPTEEASMLFNEVDKIYQQMRSIKNTAENIKKAEFGNINLSVTPALGFDALPCAIAKYHHAYPKVNFNVQTIHNNEALQALLEHKCDLAVVFSPSAMPGVKAIKIAQSELVAVFPKRLFPSIPAQLTFQELEGAEFIDISDSGPLGHLLWKRMLEENIVLDSTIKVQTYFIAARLVAQGVGVCIVDKYTAMGNLSDDIAIASFSPPLFFNVSALHLENKVLSHVLDAFLNELSNCI.

The HTH lysR-type domain occupies 1–58 (MRLRHIEVFHAIYTTGSITNAAKALHVSQPSVSKVLSHAEMQLGFKLFERVKGRLIPT). Positions 18–37 (ITNAAKALHVSQPSVSKVLS) form a DNA-binding region, H-T-H motif.

This sequence belongs to the LysR transcriptional regulatory family.

In terms of biological role, transcriptional regulator that positively regulates the expression of the D-Glu gene cluster (DGC). The cluster includes dgcN and dgcA, which are involved in a deamination-independent D-glutamate degradation pathway, dgcR itself, dgcT, dgcP and dgcH. Acts by binding the consensus sequence upstream of dgcR, dgcT, dgcP and dgcH. This chain is HTH-type transcriptional regulator DgcR, found in Pseudoalteromonas sp.